Here is a 469-residue protein sequence, read N- to C-terminus: Glutamate--tRNA ligase (469 aa).

Positions 11–21 (PSPTGFIHLGN) match the 'HIGH' region motif. The 'KMSKS' region signature appears at 243–247 (KMSKR). K246 contributes to the ATP binding site.

Belongs to the class-I aminoacyl-tRNA synthetase family. Glutamate--tRNA ligase type 1 subfamily. In terms of assembly, monomer.

The protein resides in the cytoplasm. The enzyme catalyses tRNA(Glu) + L-glutamate + ATP = L-glutamyl-tRNA(Glu) + AMP + diphosphate. Catalyzes the attachment of glutamate to tRNA(Glu) in a two-step reaction: glutamate is first activated by ATP to form Glu-AMP and then transferred to the acceptor end of tRNA(Glu). This Burkholderia orbicola (strain AU 1054) protein is Glutamate--tRNA ligase.